Reading from the N-terminus, the 184-residue chain is Large ribosomal subunit protein uL5 (184 aa).

This sequence belongs to the universal ribosomal protein uL5 family. In terms of assembly, part of the 50S ribosomal subunit; part of the 5S rRNA/L5/L18/L25 subcomplex. Contacts the 5S rRNA and the P site tRNA. Forms a bridge to the 30S subunit in the 70S ribosome.

Functionally, this is one of the proteins that bind and probably mediate the attachment of the 5S RNA into the large ribosomal subunit, where it forms part of the central protuberance. In the 70S ribosome it contacts protein S13 of the 30S subunit (bridge B1b), connecting the 2 subunits; this bridge is implicated in subunit movement. Contacts the P site tRNA; the 5S rRNA and some of its associated proteins might help stabilize positioning of ribosome-bound tRNAs. This is Large ribosomal subunit protein uL5 from Wolinella succinogenes (strain ATCC 29543 / DSM 1740 / CCUG 13145 / JCM 31913 / LMG 7466 / NCTC 11488 / FDC 602W) (Vibrio succinogenes).